Reading from the N-terminus, the 176-residue chain is Pituitary adenylate cyclase-activating polypeptide (176 aa).

Residues methionine 1–glycine 24 form the signal peptide. Positions serine 25–glutamate 80 are excised as a propeptide. The tract at residues glutamine 98–glycine 135 is disordered. The important for receptor binding stretch occupies residues valine 150–leucine 158. Leucine 158 carries the post-translational modification Leucine amide. Lysine 169 bears the Lysine amide mark. A propeptide spanning residues isoleucine 173 to leucine 176 is cleaved from the precursor.

The protein belongs to the glucagon family. In terms of assembly, interacts with ADCYAP1R1 (via N-terminal extracellular domain); both PACAP27 and PACAP38 neuropeptides function as ligand for the ADCYAP1R1 receptor, which modulates the activity of downstream effectors. Interacts with VIPR1 and VIPR2; functions as ligand for VIPR1 and VIPR2 receptors, which modulate the activity of downstream effectors.

Its subcellular location is the secreted. In terms of biological role, PACAP is a neuropeptide involved in diverse array of physiological processes through activating the PACAP subfamily of class B1 G protein-coupled receptors: VIP receptor 1 (VIPR1), VIP receptor 2 (VIPR2), and PACAP type I receptor (ADCYAP1R1). Exerts neuroprotective and general cytoprotective effects due to anti-apoptotic, anti-inflammatory, and antioxidant actions. Promotes neuron projection development through the RAPGEF2/Rap1/B-Raf/ERK pathway. In chromaffin cells, induces long-lasting increase of intracellular calcium concentrations and neuroendocrine secretion. Involved in the control of glucose homeostasis, induces insulin secretion by pancreatic beta cells. PACAP exists in two bioactive forms from proteolysis of the same precursor protein, PACAP27 and PACAP38, which differ by eleven amino acid residues in the C-terminus. The sequence is that of Pituitary adenylate cyclase-activating polypeptide (ADCYAP1) from Bos taurus (Bovine).